The following is a 658-amino-acid chain: Integrator complex subunit 9 (658 aa).

A disordered region spans residues 550–574 (KHVLQLPPKPPQPPTSKKRKRVSDD). The short motif at 566–570 (KKRKR) is the Nuclear localization signal element.

This sequence belongs to the metallo-beta-lactamase superfamily. RNA-metabolizing metallo-beta-lactamase-like family. INTS9 subfamily. Component of the Integrator complex, composed of core subunits INTS1, INTS2, INTS3, INTS4, INTS5, INTS6, INTS7, INTS8, INTS9/RC74, INTS10, INTS11/CPSF3L, INTS12, INTS13, INTS14 and INTS15. The core complex associates with protein phosphatase 2A subunits PPP2CA and PPP2R1A, to form the Integrator-PP2A (INTAC) complex. INTS9 is part of the RNA endonuclease subcomplex, composed of INTS4, INTS9, INTS11 and inositol hexakisphosphate (InsP6).

The protein resides in the nucleus. It is found in the cytoplasm. Functionally, component of the integrator complex, a multiprotein complex that terminates RNA polymerase II (Pol II) transcription in the promoter-proximal region of genes. The integrator complex provides a quality checkpoint during transcription elongation by driving premature transcription termination of transcripts that are unfavorably configured for transcriptional elongation: the complex terminates transcription by (1) catalyzing dephosphorylation of the C-terminal domain (CTD) of Pol II subunit POLR2A/RPB1 and SUPT5H/SPT5, (2) degrading the exiting nascent RNA transcript via endonuclease activity and (3) promoting the release of Pol II from bound DNA. The integrator complex is also involved in terminating the synthesis of non-coding Pol II transcripts, such as enhancer RNAs (eRNAs), small nuclear RNAs (snRNAs), telomerase RNAs and long non-coding RNAs (lncRNAs). This is Integrator complex subunit 9 (INTS9) from Gallus gallus (Chicken).